Consider the following 250-residue polypeptide: Probable transcriptional regulatory protein SYNPCC7002_A1640 (250 aa).

This sequence belongs to the TACO1 family.

It localises to the cytoplasm. The polypeptide is Probable transcriptional regulatory protein SYNPCC7002_A1640 (Picosynechococcus sp. (strain ATCC 27264 / PCC 7002 / PR-6) (Agmenellum quadruplicatum)).